The sequence spans 265 residues: UPF0354 protein GTNG_2723 (265 aa).

Belongs to the UPF0354 family.

This is UPF0354 protein GTNG_2723 from Geobacillus thermodenitrificans (strain NG80-2).